A 108-amino-acid polypeptide reads, in one-letter code: Trissin (108 aa).

An N-terminal signal peptide occupies residues 1–29; that stretch reads MTKTTMHWLAHFQIILLCIWLMCPPSSQA. 3 disulfide bridges follow: Cys-32–Cys-43, Cys-35–Cys-52, and Cys-39–Cys-51. The propeptide occupies 57 to 108; sequence RKRSDPDALRQSSNRRLIDFILLQGRALFTQELRERRHNGTLMDLGLNTYYP.

It is found in the secreted. Its function is as follows. Activates the G-protein coupled receptor TrissinR in vitro, leading to increased intracellular calcium ion levels. The polypeptide is Trissin (Drosophila melanogaster (Fruit fly)).